The primary structure comprises 73 residues: Probable minor pilin MMP0528 (73 aa).

Positions 1–10 (MLKKLYSKKG) are excised as a propeptide. A QXSXEXXXL motif is present at residues 11–19 (QVSMEMGIL).

Post-translationally, the N-terminus is probably cleaved by the prepilin peptidase EppA, which recognizes the class III signal sequence.

The protein localises to the secreted. The protein resides in the cell surface. It is found in the fimbrium. This chain is Probable minor pilin MMP0528, found in Methanococcus maripaludis (strain DSM 14266 / JCM 13030 / NBRC 101832 / S2 / LL).